The sequence spans 272 residues: MTTLACQKLAPHPESPRHQHAGPWLVWLHGLLGSGQDWLPVAQLCGDYPSLLIDLPGHGQSVSLSADGFADISRQLSQTLQANGIREYWLAGYSLGGRIAIYHACYGRHHGLQGLLVEGGNLGLENAELRQARLQQDRQWAQRFRQEPLPQVLDDWYQQAVFADLDPQQREQLVLLRADNHGPAVAEMLEATSLGHQPWLLPALQRLNVPYTYLCGDRDHKFLQLAQQYRLPLHTLARAGHNAHRANPGAFAAQVLAFLSQSSCLPPSSLSR.

Belongs to the AB hydrolase superfamily. MenH family. Monomer.

It catalyses the reaction 5-enolpyruvoyl-6-hydroxy-2-succinyl-cyclohex-3-ene-1-carboxylate = (1R,6R)-6-hydroxy-2-succinyl-cyclohexa-2,4-diene-1-carboxylate + pyruvate. The protein operates within quinol/quinone metabolism; 1,4-dihydroxy-2-naphthoate biosynthesis; 1,4-dihydroxy-2-naphthoate from chorismate: step 3/7. It participates in quinol/quinone metabolism; menaquinone biosynthesis. Functionally, catalyzes a proton abstraction reaction that results in 2,5-elimination of pyruvate from 2-succinyl-5-enolpyruvyl-6-hydroxy-3-cyclohexene-1-carboxylate (SEPHCHC) and the formation of 2-succinyl-6-hydroxy-2,4-cyclohexadiene-1-carboxylate (SHCHC). This chain is 2-succinyl-6-hydroxy-2,4-cyclohexadiene-1-carboxylate synthase, found in Yersinia pseudotuberculosis serotype IB (strain PB1/+).